The chain runs to 205 residues: Small ribosomal subunit protein uS4 (205 aa).

Positions 18-49 are disordered; sequence NIWGRPKSPVNKREYGPGQHGQRRKGKLSDFG. The S4 RNA-binding domain maps to 94–157; that stretch reads RRLDAIVYRA…KQLALVLEAN (64 aa).

This sequence belongs to the universal ribosomal protein uS4 family. In terms of assembly, part of the 30S ribosomal subunit. Contacts protein S5. The interaction surface between S4 and S5 is involved in control of translational fidelity.

Its function is as follows. One of the primary rRNA binding proteins, it binds directly to 16S rRNA where it nucleates assembly of the body of the 30S subunit. With S5 and S12 plays an important role in translational accuracy. The protein is Small ribosomal subunit protein uS4 of Afipia carboxidovorans (strain ATCC 49405 / DSM 1227 / KCTC 32145 / OM5) (Oligotropha carboxidovorans).